The following is a 281-amino-acid chain: MKVLVPATTTNLGAGFDVFGLALDLFNEVEFSFDTKETTIESTGKYASDLKDHNLFFEVFRFFERKTGYRVPPVRIKQTCNIPVSSGLGSSAAVIVAALHIANEGTGRNLSREDLMKLAVELEGHPDNVVPAFTGGLVVCYQNGSHLDFEKFEIDLSLTFFVPNFSMCTNEMRKILPEKVPFEDAVFNIKNSCQFLAKIAAGKIKEALKYVGDRLHQNYRINGNKKMKEFVEAILSKNPEYWFVSGSGPSVCSNINDFEGIPYLKDVLKLRVNNRGMIVSE.

83–93 (PVSSGLGSSAA) serves as a coordination point for ATP.

This sequence belongs to the GHMP kinase family. Homoserine kinase subfamily.

Its subcellular location is the cytoplasm. The enzyme catalyses L-homoserine + ATP = O-phospho-L-homoserine + ADP + H(+). It functions in the pathway amino-acid biosynthesis; L-threonine biosynthesis; L-threonine from L-aspartate: step 4/5. Functionally, catalyzes the ATP-dependent phosphorylation of L-homoserine to L-homoserine phosphate. The chain is Homoserine kinase from Thermotoga petrophila (strain ATCC BAA-488 / DSM 13995 / JCM 10881 / RKU-1).